A 185-amino-acid chain; its full sequence is Adenylyl-sulfate kinase (185 aa).

Residue 13 to 20 (GLSGAGKT) participates in ATP binding. The active-site Phosphoserine intermediate is Ser87.

It belongs to the APS kinase family.

It catalyses the reaction adenosine 5'-phosphosulfate + ATP = 3'-phosphoadenylyl sulfate + ADP + H(+). Its pathway is sulfur metabolism; hydrogen sulfide biosynthesis; sulfite from sulfate: step 2/3. In terms of biological role, catalyzes the synthesis of activated sulfate. The polypeptide is Adenylyl-sulfate kinase (Halothermothrix orenii (strain H 168 / OCM 544 / DSM 9562)).